The chain runs to 171 residues: Peptide deformylase (171 aa).

Residues Cys91 and His133 each coordinate Fe cation. Glu134 is an active-site residue. A Fe cation-binding site is contributed by His137.

It belongs to the polypeptide deformylase family. The cofactor is Fe(2+).

It catalyses the reaction N-terminal N-formyl-L-methionyl-[peptide] + H2O = N-terminal L-methionyl-[peptide] + formate. Functionally, removes the formyl group from the N-terminal Met of newly synthesized proteins. Requires at least a dipeptide for an efficient rate of reaction. N-terminal L-methionine is a prerequisite for activity but the enzyme has broad specificity at other positions. This chain is Peptide deformylase, found in Mannheimia succiniciproducens (strain KCTC 0769BP / MBEL55E).